Here is a 224-residue protein sequence, read N- to C-terminus: RNA-binding protein 24-B (224 aa).

Residues 11 to 88 enclose the RRM domain; sequence TKIFVGGLPY…RKANVNLAYL (78 aa).

The protein localises to the nucleus. The protein resides in the cytoplasm. Its function is as follows. Multifunctional RNA-binding protein involved in the regulation of pre-mRNA splicing, mRNA stability and mRNA translation important for cell fate decision and differentiation. Plays a major role in pre-mRNA alternative splicing regulation. Mediates preferentially muscle-specific exon inclusion in numerous mRNAs important for striated cardiac and skeletal muscle cell differentiation. Binds to intronic splicing enhancer (ISE) composed of stretches of GU-rich motifs localized in flanking intron of exon that will be included by alternative splicing. Involved in embryonic stem cell (ESC) transition to cardiac cell differentiation by promoting pre-mRNA alternative splicing events of several pluripotency and/or differentiation genes. Plays a role in the regulation of mRNA stability and mRNA translation to which it is bound. Involved in myogenic differentiation by regulating myog levels. Binds to a huge amount of mRNAs. Required for embryonic heart development, sarcomer and M-band formation in striated muscles. This is RNA-binding protein 24-B (rbm24-b) from Xenopus laevis (African clawed frog).